Consider the following 319-residue polypeptide: L-lactate dehydrogenase 2 (319 aa).

NAD(+) contacts are provided by residues V17, D38, K43, Y69, and 83–84 (GA). Residues Q86 and R92 each contribute to the substrate site. Residues S105, 122-124 (ATN), and S147 contribute to the NAD(+) site. Substrate is bound at residue 124-127 (NPVD). 152–155 (DSGR) is a binding site for substrate. Residues R157 and H172 each coordinate beta-D-fructose 1,6-bisphosphate. The Proton acceptor role is filled by H179. Residue Y224 is modified to Phosphotyrosine. T233 is a binding site for substrate.

This sequence belongs to the LDH/MDH superfamily. LDH family. In terms of assembly, homotetramer.

Its subcellular location is the cytoplasm. The enzyme catalyses (S)-lactate + NAD(+) = pyruvate + NADH + H(+). It functions in the pathway fermentation; pyruvate fermentation to lactate; (S)-lactate from pyruvate: step 1/1. Its activity is regulated as follows. Allosterically activated by fructose 1,6-bisphosphate (FBP). Functionally, catalyzes the conversion of lactate to pyruvate. The protein is L-lactate dehydrogenase 2 of Peribacillus psychrosaccharolyticus (Bacillus psychrosaccharolyticus).